Consider the following 626-residue polypeptide: DNA mismatch repair protein MutL (626 aa).

The segment at 352 to 399 (QPPSPSFTSRPSSAGYASGSWHPAVSSPRTEWSPQTAHPAHRPLDLGA) is disordered. Residues 378 to 387 (SPRTEWSPQT) are compositionally biased toward polar residues.

This sequence belongs to the DNA mismatch repair MutL/HexB family.

Functionally, this protein is involved in the repair of mismatches in DNA. It is required for dam-dependent methyl-directed DNA mismatch repair. May act as a 'molecular matchmaker', a protein that promotes the formation of a stable complex between two or more DNA-binding proteins in an ATP-dependent manner without itself being part of a final effector complex. This is DNA mismatch repair protein MutL from Brucella anthropi (strain ATCC 49188 / DSM 6882 / CCUG 24695 / JCM 21032 / LMG 3331 / NBRC 15819 / NCTC 12168 / Alc 37) (Ochrobactrum anthropi).